A 381-amino-acid polypeptide reads, in one-letter code: MNALDGVPFKLPKGFVIGTEPLPGPELSVPACGEVLLGSMHDFSLERTALFWVEAAGQGPSPYQCGDPGTASAPPAWLLLVSPEHGLAPAPTTIRDPEAGHQERPEEEGEDEAEASSGSEEEPAPSSLQPGSPASPGPGRRLCSLDVLRGVRLELAGARRRLSEGKLVSRPRALLHGLRGHRALSLCPSPAQSPRSASPPGPAPQHPAAPASPPRPSTAGAIPPLRSHKPTVASLSPYTCLPPLGGAPQPLNPHKSHPDTAADLLSALSQEEQDLIGPVVALGYPLRRAIIALQKTGRQSLSQFLSYLSACDRLLRQGYEEGLVDEAMEMFQFSESQAGEFLRLWEQFSDMGFQQDRIKEVLLVHGNRREQALEELVACAQ.

The UMA domain maps to 4–50; the sequence is LDGVPFKLPKGFVIGTEPLPGPELSVPACGEVLLGSMHDFSLERTAL. Disordered stretches follow at residues 87-141 and 185-228; these read LAPA…PGRR and SLCP…LRSH. The segment covering 95-104 has biased composition (basic and acidic residues); it reads RDPEAGHQER. Positions 105–123 are enriched in acidic residues; it reads PEEEGEDEAEASSGSEEEP. Positions 124–141 are enriched in low complexity; sequence APSSLQPGSPASPGPGRR. Pro residues predominate over residues 197–216; it reads ASPPGPAPQHPAAPASPPRP.

The sequence is that of Ubiquitin-associated protein 1-like (UBAP1L) from Homo sapiens (Human).